The chain runs to 258 residues: Phosphatidylglycerol--prolipoprotein diacylglyceryl transferase (258 aa).

A run of 7 helical transmembrane segments spans residues 9-29, 53-73, 90-110, 117-139, 169-189, 198-218, and 230-250; these read ILIQ…ATGF, LLTY…TLIY, EGGL…WLFV, KFLW…IRLG, PVQL…LMLF, GFLF…IEYF, and LISV…VLML. Arginine 137 serves as a coordination point for a 1,2-diacyl-sn-glycero-3-phospho-(1'-sn-glycerol).

The protein belongs to the Lgt family.

The protein resides in the cell inner membrane. The catalysed reaction is L-cysteinyl-[prolipoprotein] + a 1,2-diacyl-sn-glycero-3-phospho-(1'-sn-glycerol) = an S-1,2-diacyl-sn-glyceryl-L-cysteinyl-[prolipoprotein] + sn-glycerol 1-phosphate + H(+). Its pathway is protein modification; lipoprotein biosynthesis (diacylglyceryl transfer). Its function is as follows. Catalyzes the transfer of the diacylglyceryl group from phosphatidylglycerol to the sulfhydryl group of the N-terminal cysteine of a prolipoprotein, the first step in the formation of mature lipoproteins. The polypeptide is Phosphatidylglycerol--prolipoprotein diacylglyceryl transferase (Tolumonas auensis (strain DSM 9187 / NBRC 110442 / TA 4)).